A 329-amino-acid polypeptide reads, in one-letter code: Myoblast determination protein 1 homolog (329 aa).

The bHLH domain occupies 160–211; it reads DRRKAATMRERRRLRKVNEAFEVVKQRTCPNPNQRLPKVEILRSAIDYINTL. The segment at 256–279 is disordered; sequence NPDGPNVYDDEDLSDTDEDRDHHH. Acidic residues predominate over residues 263–273; sequence YDDEDLSDTDE.

In terms of assembly, efficient DNA binding requires dimerization with another bHLH protein. As to expression, body wall muscle cells; in clonal muscle precursors, in a set of early embryonic blastomeres (the ms-granddaughters), and in six glial-like cells called GLRS.

Its subcellular location is the nucleus. In terms of biological role, accumulation defines the body wall muscle cell fate during embryogenesis. The protein is Myoblast determination protein 1 homolog (hlh-1) of Caenorhabditis briggsae.